The chain runs to 295 residues: Sulfotransferase 1E1 (295 aa).

48 to 53 (KSGSTW) is a binding site for 3'-phosphoadenylyl sulfate. 106-108 (KTH) contributes to the substrate binding site. H108 serves as the catalytic Proton acceptor. 3'-phosphoadenylyl sulfate is bound by residues R130 and S138. Phosphoserine is present on S156. 3'-phosphoadenylyl sulfate is bound by residues Y193, 227 to 232 (TSFQEM), and 257 to 259 (RKG).

Belongs to the sulfotransferase 1 family. As to quaternary structure, homodimer. In terms of tissue distribution, liver of young mature males and uterus.

It is found in the cytoplasm. It localises to the cytosol. The enzyme catalyses estrone + 3'-phosphoadenylyl sulfate = estrone 3-sulfate + adenosine 3',5'-bisphosphate + H(+). The catalysed reaction is (24S)-hydroxycholesterol + 3'-phosphoadenylyl sulfate = (24S)-hydroxycholesterol 3-sulfate + adenosine 3',5'-bisphosphate + H(+). It carries out the reaction 17beta-estradiol + 3'-phosphoadenylyl sulfate = 17beta-estradiol 3-sulfate + adenosine 3',5'-bisphosphate + H(+). It catalyses the reaction 3beta-hydroxyandrost-5-en-17-one + 3'-phosphoadenylyl sulfate = dehydroepiandrosterone 3-sulfate + adenosine 3',5'-bisphosphate + H(+). The enzyme catalyses 4-ethylphenol + 3'-phosphoadenylyl sulfate = 4-ethylphenyl sulfate + adenosine 3',5'-bisphosphate + H(+). With respect to regulation, inhibited by estradiol. In terms of biological role, sulfotransferase that utilizes 3'-phospho-5'-adenylyl sulfate (PAPS) as sulfonate donor to catalyze the sulfate conjugation of estradiol and estrone. Is a key enzyme in estrogen homeostasis, the sulfation of estrogens leads to their inactivation. Also sulfates dehydroepiandrosterone (DHEA), pregnenolone, (24S)-hydroxycholesterol and xenobiotic compounds like ethinylestradiol, equalenin, diethyl stilbesterol and 1-naphthol at significantly lower efficiency. Does not sulfonate cortisol, testosterone and dopamine. May play a role in gut microbiota-host metabolic interaction. O-sulfonates 4-ethylphenol (4-EP), a dietary tyrosine-derived metabolite produced by gut bacteria. The product 4-EPS crosses the blood-brain barrier and may negatively regulate oligodendrocyte maturation and myelination, affecting the functional connectivity of different brain regions associated with the limbic system. This Rattus norvegicus (Rat) protein is Sulfotransferase 1E1.